The sequence spans 490 residues: tRNA-guanine(15) transglycosylase (490 aa).

D90 serves as the catalytic Nucleophile. Substrate-binding residues include D125 and A193. C276, C278, and C281 together coordinate Zn(2+).

The protein belongs to the archaeosine tRNA-ribosyltransferase family. Zn(2+) is required as a cofactor.

The enzyme catalyses guanosine(15) in tRNA + 7-cyano-7-deazaguanine = 7-cyano-7-carbaguanosine(15) in tRNA + guanine. It participates in tRNA modification; archaeosine-tRNA biosynthesis. In terms of biological role, exchanges the guanine residue with 7-cyano-7-deazaguanine (preQ0) at position 15 in the dihydrouridine loop (D-loop) of archaeal tRNAs. The protein is tRNA-guanine(15) transglycosylase of Methanosarcina barkeri (strain Fusaro / DSM 804).